Consider the following 271-residue polypeptide: Ribosomal RNA small subunit methyltransferase A (271 aa).

S-adenosyl-L-methionine contacts are provided by His11, Leu13, Gly38, Glu58, Asp86, and Asn101.

It belongs to the class I-like SAM-binding methyltransferase superfamily. rRNA adenine N(6)-methyltransferase family. RsmA subfamily.

It localises to the cytoplasm. It catalyses the reaction adenosine(1518)/adenosine(1519) in 16S rRNA + 4 S-adenosyl-L-methionine = N(6)-dimethyladenosine(1518)/N(6)-dimethyladenosine(1519) in 16S rRNA + 4 S-adenosyl-L-homocysteine + 4 H(+). Functionally, specifically dimethylates two adjacent adenosines (A1518 and A1519) in the loop of a conserved hairpin near the 3'-end of 16S rRNA in the 30S particle. May play a critical role in biogenesis of 30S subunits. The chain is Ribosomal RNA small subunit methyltransferase A from Helicobacter pylori (strain J99 / ATCC 700824) (Campylobacter pylori J99).